We begin with the raw amino-acid sequence, 556 residues long: Amidophosphoribosyltransferase (556 aa).

The propeptide occupies 1–57 (MCLAVGVGVRAPKHVPQIRRLGRAGRRLRCVTNCALGSCPIVTVQQPGRDFSSPREE). Cys-58 acts as the Nucleophile in catalysis. The 227-residue stretch at 58–284 (CGVFGVWAPG…PGELLAIDAD (227 aa)) folds into the Glutamine amidotransferase type-2 domain. Cys-299 contributes to the [4Fe-4S] cluster binding site. Residues Ser-346, Asp-408, and Asp-409 each contribute to the Mg(2+) site. Cys-445, Cys-501, and Cys-504 together coordinate [4Fe-4S] cluster.

It in the C-terminal section; belongs to the purine/pyrimidine phosphoribosyltransferase family. The cofactor is Mg(2+). [4Fe-4S] cluster serves as cofactor.

The enzyme catalyses 5-phospho-beta-D-ribosylamine + L-glutamate + diphosphate = 5-phospho-alpha-D-ribose 1-diphosphate + L-glutamine + H2O. Its pathway is purine metabolism; IMP biosynthesis via de novo pathway; N(1)-(5-phospho-D-ribosyl)glycinamide from 5-phospho-alpha-D-ribose 1-diphosphate: step 1/2. In terms of biological role, catalyzes the formation of phosphoribosylamine from phosphoribosylpyrophosphate (PRPP) and glutamine. The protein is Amidophosphoribosyltransferase of Mycobacterium leprae (strain TN).